The chain runs to 431 residues: Serine--tRNA ligase (431 aa).

237–239 (TAE) is a binding site for L-serine. Residue 268–270 (RSE) coordinates ATP. Glu-291 contacts L-serine. Position 355 to 358 (355 to 358 (EISS)) interacts with ATP. Ser-390 lines the L-serine pocket.

The protein belongs to the class-II aminoacyl-tRNA synthetase family. Type-1 seryl-tRNA synthetase subfamily. As to quaternary structure, homodimer. The tRNA molecule binds across the dimer.

It localises to the cytoplasm. The catalysed reaction is tRNA(Ser) + L-serine + ATP = L-seryl-tRNA(Ser) + AMP + diphosphate + H(+). It catalyses the reaction tRNA(Sec) + L-serine + ATP = L-seryl-tRNA(Sec) + AMP + diphosphate + H(+). Its pathway is aminoacyl-tRNA biosynthesis; selenocysteinyl-tRNA(Sec) biosynthesis; L-seryl-tRNA(Sec) from L-serine and tRNA(Sec): step 1/1. Functionally, catalyzes the attachment of serine to tRNA(Ser). Is also able to aminoacylate tRNA(Sec) with serine, to form the misacylated tRNA L-seryl-tRNA(Sec), which will be further converted into selenocysteinyl-tRNA(Sec). In Neisseria meningitidis serogroup A / serotype 4A (strain DSM 15465 / Z2491), this protein is Serine--tRNA ligase.